Consider the following 95-residue polypeptide: Aspartyl/glutamyl-tRNA(Asn/Gln) amidotransferase subunit C (95 aa).

This sequence belongs to the GatC family. In terms of assembly, heterotrimer of A, B and C subunits.

The catalysed reaction is L-glutamyl-tRNA(Gln) + L-glutamine + ATP + H2O = L-glutaminyl-tRNA(Gln) + L-glutamate + ADP + phosphate + H(+). The enzyme catalyses L-aspartyl-tRNA(Asn) + L-glutamine + ATP + H2O = L-asparaginyl-tRNA(Asn) + L-glutamate + ADP + phosphate + 2 H(+). Its function is as follows. Allows the formation of correctly charged Asn-tRNA(Asn) or Gln-tRNA(Gln) through the transamidation of misacylated Asp-tRNA(Asn) or Glu-tRNA(Gln) in organisms which lack either or both of asparaginyl-tRNA or glutaminyl-tRNA synthetases. The reaction takes place in the presence of glutamine and ATP through an activated phospho-Asp-tRNA(Asn) or phospho-Glu-tRNA(Gln). This chain is Aspartyl/glutamyl-tRNA(Asn/Gln) amidotransferase subunit C, found in Ruthia magnifica subsp. Calyptogena magnifica.